A 294-amino-acid polypeptide reads, in one-letter code: Gap junction delta-3 protein (294 aa).

The Cytoplasmic portion of the chain corresponds to 1-24; it reads MGEWAFLGSLLDAVQLQSPLVGRL. The chain crosses the membrane as a helical span at residues 25–45; it reads WLVVMLIFRILVLATVGGAVF. Residues 46–76 lie on the Extracellular side of the membrane; sequence EDEQEEFVCNTLQPGCRQTCYDRAFPVSHYR. The chain crosses the membrane as a helical span at residues 77-97; sequence FWLFHILLLSAPPVLFVVYSM. At 98–136 the chain is on the cytoplasmic side; that stretch reads HRAGKEAGGAEAAAQCAPGLPEAQCAPCALRARRARRCY. A helical transmembrane segment spans residues 137 to 157; that stretch reads LLSVALRLLAELTFLGGQALL. Over 158–188 the chain is Extracellular; that stretch reads YGFRVAPHFACAGPPCPHTVDCFVSRPTEKT. Residues 189-209 traverse the membrane as a helical segment; sequence VFVLFYFAVGLLSALLSVAEL. Residues 210–294 are Cytoplasmic-facing; it reads GHLLWKGRPR…PATGRRDLAI (85 aa). A disordered region spans residues 233–294; sequence EAQKLLPPPP…PATGRRDLAI (62 aa). The segment covering 238 to 250 has biased composition (pro residues); that stretch reads LPPPPPPPPPPAL.

This sequence belongs to the connexin family. Delta-type subfamily. As to quaternary structure, a connexon is composed of a hexamer of connexins. Interacts with TJP1. As to expression, expressed in vascular smooth muscle cells. Found in heart, colon, and artery (at protein level). Found in cerebral cortex, heart, liver, lung, kidney, spleen and testis.

Its subcellular location is the cell membrane. The protein resides in the cell junction. The protein localises to the gap junction. Its function is as follows. One gap junction consists of a cluster of closely packed pairs of transmembrane channels, the connexons, through which materials of low MW diffuse from one cell to a neighboring cell. The chain is Gap junction delta-3 protein (GJD3) from Homo sapiens (Human).